We begin with the raw amino-acid sequence, 118 residues long: Large ribosomal subunit protein bL20 (118 aa).

The protein belongs to the bacterial ribosomal protein bL20 family.

In terms of biological role, binds directly to 23S ribosomal RNA and is necessary for the in vitro assembly process of the 50S ribosomal subunit. It is not involved in the protein synthesizing functions of that subunit. In Shewanella baltica (strain OS223), this protein is Large ribosomal subunit protein bL20.